The primary structure comprises 207 residues: Large ribosomal subunit protein bL25 (207 aa).

The segment at 171–207 (EEETVVTVSAPRAEEEPTTTEAPEPEAVHGNDEEPVE) is disordered. The span at 196–207 (EAVHGNDEEPVE) shows a compositional bias: basic and acidic residues.

This sequence belongs to the bacterial ribosomal protein bL25 family. CTC subfamily. In terms of assembly, part of the 50S ribosomal subunit; part of the 5S rRNA/L5/L18/L25 subcomplex. Contacts the 5S rRNA. Binds to the 5S rRNA independently of L5 and L18.

This is one of the proteins that binds to the 5S RNA in the ribosome where it forms part of the central protuberance. This chain is Large ribosomal subunit protein bL25, found in Listeria innocua serovar 6a (strain ATCC BAA-680 / CLIP 11262).